The sequence spans 20 residues: Agglutinin beta-2 chain (20 aa).

Residues 1–20 (GRNGKSQSIIVGPWGDRVTN) are disordered.

The protein belongs to the jacalin lectin family. In terms of assembly, formed of four alpha chains and four beta chains.

Its function is as follows. D-galactose-specific lectin, binds the T-antigen structure Gal-beta1,3-GalNAc. In Maclura pomifera (Osage orange), this protein is Agglutinin beta-2 chain.